The following is a 213-amino-acid chain: Isomeliandiol synthase MOI2 (213 aa).

5 consecutive transmembrane segments (helical) span residues 18 to 38, 52 to 72, 109 to 129, 137 to 157, and 171 to 191; these read AALH…SWFI, VLCW…YYVF, IESM…YALA, ILQF…FLSA, and YWAY…LIAI. An EXPERA domain is found at 48 to 190; sequence MDRVVLCWWA…IWVIVPALIA (143 aa).

This sequence belongs to the EBP family. As to expression, mainly expressed in petioles.

The protein resides in the membrane. The catalysed reaction is 7,8-epoxymelianol = isomeliandiol. Its pathway is secondary metabolite biosynthesis; terpenoid biosynthesis. Functionally, isomerase involved in the biosynthesis of limonoids triterpene natural products such as azadirachtin, an antifeedant widely used as bioinsecticide, and possessing many medicinal applications including anti-tumoral, anti-malarial, anti-rheumatic, antibacterial, anti-inflammatory, anti-pyretic and diuretic effects. Catalyzes the conversion of 7,8-epoxymelianol to isomeliandiol via skeletal rearrangements. This is Isomeliandiol synthase MOI2 from Melia azedarach (Chinaberry tree).